Here is a 208-residue protein sequence, read N- to C-terminus: Large ribosomal subunit protein bL25 (208 aa).

A disordered region spans residues 1–20 (MANHQIKAQRRKDEGKGASR).

This sequence belongs to the bacterial ribosomal protein bL25 family. CTC subfamily. In terms of assembly, part of the 50S ribosomal subunit; part of the 5S rRNA/L5/L18/L25 subcomplex. Contacts the 5S rRNA. Binds to the 5S rRNA independently of L5 and L18.

Functionally, this is one of the proteins that binds to the 5S RNA in the ribosome where it forms part of the central protuberance. The protein is Large ribosomal subunit protein bL25 of Xylella fastidiosa (strain 9a5c).